The chain runs to 317 residues: Protease 7 (317 aa).

A signal peptide spans 1-20 (MRAKLLGIVLTTPIAISSFA). Over 21 to 31 (STETLSFTPDN) the chain is Periplasmic. The beta stranded transmembrane segment at 32 to 41 (INADISLGTL) threads the bilayer. At 42-69 (SGKTKERVYLAEEGGRKVSQLDWKFNNA) the chain is on the extracellular side. Residues 70 to 78 (AIIKGAINW) traverse the membrane as a beta stranded segment. Over 79-83 (DLMPQ) the chain is Periplasmic. A beta stranded transmembrane segment spans residues 84 to 92 (ISIGAAGWT). Over 93-130 (TLGSRGGNMVDQDWMDSSNPGTWTDESRHPDTQLNYAN) the chain is Extracellular. Residues Asp103 and Asp105 contribute to the active site. A beta stranded membrane pass occupies residues 131–140 (EFDLNIKGWL). The Periplasmic portion of the chain corresponds to 141 to 145 (LNEPN). The chain crosses the membrane as a beta stranded span at residues 146–156 (YRLGLMAGYQE). The Extracellular segment spans residues 157-197 (SRYSFTARGGSYIYSSEEGFRDDIGSFPNGERAIGYKQRFK). A beta stranded transmembrane segment spans residues 198–209 (MPYIGLTGSYRY). Over 210–211 (ED) the chain is Periplasmic. Residues 212–221 (FELGGTFKYS) traverse the membrane as a beta stranded segment. Residues 222-250 (GWVESSDNDEHYDPGKRITYRSKVKDQNY) are Extracellular-facing. Residues Asp230 and His232 contribute to the active site. Residues 251–261 (YSVAVNAGYYV) form a beta stranded membrane-spanning segment. Over 262 to 264 (TPN) the chain is Periplasmic. Residues 265–274 (AKVYVEGAWN) traverse the membrane as a beta stranded segment. Over 275-306 (RVTNKKGNTSLYDHNNNTSDYSKNGAGIENYN) the chain is Extracellular. Residues 307-316 (FITTAGLKYT) traverse the membrane as a beta stranded segment. Phe317 is a topological domain (periplasmic).

The protein belongs to the peptidase A26 family. In terms of assembly, homopentamer.

Its subcellular location is the cell outer membrane. The catalysed reaction is Has a virtual requirement for Arg in the P1 position and a slightly less stringent preference for this residue in the P1' position, which can also contain Lys, Gly or Val.. With respect to regulation, inhibited by zinc. Protease that can cleave T7 RNA polymerase, ferric enterobactin receptor protein (FEP), antimicrobial peptide protamine and other proteins. This protease has a specificity for paired basic residues. The chain is Protease 7 (ompT) from Escherichia coli (strain K12).